The chain runs to 473 residues: ATP synthase subunit beta (473 aa).

Residue 153–160 (GGAGVGKT) coordinates ATP.

The protein belongs to the ATPase alpha/beta chains family. As to quaternary structure, F-type ATPases have 2 components, CF(1) - the catalytic core - and CF(0) - the membrane proton channel. CF(1) has five subunits: alpha(3), beta(3), gamma(1), delta(1), epsilon(1). CF(0) has three main subunits: a(1), b(2) and c(9-12). The alpha and beta chains form an alternating ring which encloses part of the gamma chain. CF(1) is attached to CF(0) by a central stalk formed by the gamma and epsilon chains, while a peripheral stalk is formed by the delta and b chains.

Its subcellular location is the cell inner membrane. It carries out the reaction ATP + H2O + 4 H(+)(in) = ADP + phosphate + 5 H(+)(out). Its function is as follows. Produces ATP from ADP in the presence of a proton gradient across the membrane. The catalytic sites are hosted primarily by the beta subunits. The chain is ATP synthase subunit beta from Rickettsia canadensis (strain McKiel).